Here is a 255-residue protein sequence, read N- to C-terminus: Imidazole glycerol phosphate synthase subunit HisF (255 aa).

Catalysis depends on residues D11 and D130.

The protein belongs to the HisA/HisF family. Heterodimer of HisH and HisF.

Its subcellular location is the cytoplasm. It catalyses the reaction 5-[(5-phospho-1-deoxy-D-ribulos-1-ylimino)methylamino]-1-(5-phospho-beta-D-ribosyl)imidazole-4-carboxamide + L-glutamine = D-erythro-1-(imidazol-4-yl)glycerol 3-phosphate + 5-amino-1-(5-phospho-beta-D-ribosyl)imidazole-4-carboxamide + L-glutamate + H(+). It participates in amino-acid biosynthesis; L-histidine biosynthesis; L-histidine from 5-phospho-alpha-D-ribose 1-diphosphate: step 5/9. Its function is as follows. IGPS catalyzes the conversion of PRFAR and glutamine to IGP, AICAR and glutamate. The HisF subunit catalyzes the cyclization activity that produces IGP and AICAR from PRFAR using the ammonia provided by the HisH subunit. The sequence is that of Imidazole glycerol phosphate synthase subunit HisF from Maricaulis maris (strain MCS10) (Caulobacter maris).